Here is a 323-residue protein sequence, read N- to C-terminus: Aldo-keto reductase family 1 member C23-like protein (323 aa).

20-24 (GFGTY) serves as a coordination point for NADP(+). Lys31 contributes to the substrate binding site. Asp50 is an NADP(+) binding site. Tyr55 serves as the catalytic Proton donor. His117 is a substrate binding site. NADP(+) contacts are provided by residues 166–167 (SN), Gln190, 216–222 (YGALGTQ), and 270–280 (KSYNEKRIKEN).

It belongs to the aldo/keto reductase family. In terms of assembly, monomer. Detected in endometrium surface epithelium (at protein level). Detected in endometrium.

The protein resides in the cytoplasm. NADP-dependent oxidoreductase involved in steroid metabolism. May act on various hydroxysteroids. The polypeptide is Aldo-keto reductase family 1 member C23-like protein (PGFS) (Equus caballus (Horse)).